Here is a 943-residue protein sequence, read N- to C-terminus: Lysine-specific demethylase JMJ21 (943 aa).

Residues 14 to 60 (LGSLSVLPDETICVLLEYLAPRDIAHLACVSSVMYILCNEEPLWMSL) enclose the F-box domain. The region spanning 216-379 (EAAPELLKDY…FVCLDMAPGY (164 aa)) is the JmjC domain. Fe cation contacts are provided by H262, D264, and H347. The segment covering 396–410 (NSEDLEEETHDEEDN) has biased composition (acidic residues). The disordered stretch occupies residues 396–438 (NSEDLEEETHDEEDNTLSYSDLTRKEKRTRMNGGGETENREED).

Belongs to the JARID1 histone demethylase family. The cofactor is Fe(2+). As to expression, mostly expressed in leaves, and, to a lower extent, in inflorescences, roots, siliques and stems.

Its subcellular location is the nucleus. Its function is as follows. May function as histone H3 lysine demethylase and be involved in regulation of gene expression. The protein is Lysine-specific demethylase JMJ21 of Arabidopsis thaliana (Mouse-ear cress).